A 201-amino-acid chain; its full sequence is Superoxide dismutase [Mn/Fe] (201 aa).

4 residues coordinate Fe(3+): H27, H75, D161, and H165. Mn(2+) contacts are provided by H27, H75, D161, and H165.

The protein belongs to the iron/manganese superoxide dismutase family. Homotetramer. Requires Mn(2+) as cofactor. The cofactor is Fe(3+).

The enzyme catalyses 2 superoxide + 2 H(+) = H2O2 + O2. Shows decreasing activity with increasing pH. Slightly inhibited by azide and fluoride at pH 7-8; the inhibition is drastically increased towards lower pH. In terms of biological role, destroys superoxide anion radicals which are normally produced within the cells and which are toxic to biological systems. Catalyzes the dismutation of superoxide anion radicals into O2 and H2O2 by successive reduction and oxidation of the transition metal ion at the active site. This Propionibacterium freudenreichii subsp. shermanii protein is Superoxide dismutase [Mn/Fe] (sodA).